The sequence spans 58 residues: Large ribosomal subunit protein uL30 (58 aa).

It belongs to the universal ribosomal protein uL30 family. As to quaternary structure, part of the 50S ribosomal subunit.

This Pseudomonas putida (strain W619) protein is Large ribosomal subunit protein uL30.